A 732-amino-acid chain; its full sequence is Small conductance calcium-activated potassium channel protein 3 (732 aa).

Over residues 1–11 the composition is skewed to basic and acidic residues; that stretch reads MDTSGHFHDSG. Disordered regions lie at residues 1 to 82 and 119 to 161; these read MDTS…QQAP and AILH…QASP. Residues 35–61 are compositionally biased toward pro residues; the sequence is QPPPPPAPPAVPQQPPGPLLQPQPPQP. The segment covering 62-82 has biased composition (low complexity); the sequence is QQQQSQQQQQQQSQQQQQQAP. Residues 119-133 are compositionally biased toward polar residues; the sequence is AILHPSSRQGSQLNL. Residues 139 to 148 show a composition bias toward low complexity; the sequence is GHSPSSTATS. Position 168 is a phosphoserine (Ser168). The segment covering 241-257 has biased composition (polar residues); the sequence is THNHQHAGTTAGSTTFP. The segment at 241-260 is disordered; it reads THNHQHAGTTAGSTTFPKAN. A helical transmembrane segment spans residues 289–309; that stretch reads LIFGMFGIVVMVIETELSWGL. Residues 316-336 form a helical membrane-spanning segment; the sequence is FSLALKCLISLSTVILLGLII. A helical transmembrane segment spans residues 367–387; sequence ISLEMLVCAIHPIPGEYKFFW. The helical transmembrane segment at 406–426 threads the bilayer; it reads IILSIPMFLRLYLIARVMLLH. A helical transmembrane segment spans residues 455-475; the sequence is LMTICPGTVLLVFSISLWIIA. An intramembrane region (pore-forming) is located at residues 495-515; the sequence is FLGAMWLISITFLSIGYGDMV. Residues 524-544 traverse the membrane as a helical segment; it reads VCLLTGIMGAGCTALVVAVVA. Positions 562-638 are calmodulin-binding; the sequence is DTQLTKRIKN…LVDLSKMQNV (77 aa). The stretch at 643–670 forms a coiled coil; it reads ITELNDRSEDLEKQIGSLESKLEHLTAS. Residues 704-732 are disordered; sequence GTSHAPPSDSPIGISSTSFPTPYTSSSSC. The span at 718-732 shows a compositional bias: low complexity; sequence SSTSFPTPYTSSSSC.

It belongs to the potassium channel KCNN family. KCa2.3/KCNN3 subfamily. Homodimer. Heteromultimer with KCNN2 or KCNN1; this modulates plasma membrane expression and consequently the small conductance calcium-activated potassium channel activity. The complex is composed of 4 channel subunits each of which binds to a calmodulin subunit which regulates the channel activity through calcium-binding. Interacts with CALM1. Expressed at low levels in atrial and ventricular myocytes (at protein level).

It localises to the cell membrane. It is found in the cytoplasm. The protein resides in the myofibril. The protein localises to the sarcomere. Its subcellular location is the z line. It carries out the reaction K(+)(in) = K(+)(out). With respect to regulation, inhibited by bee venom neurotoxin apamin. Functionally, small conductance calcium-activated potassium channel that mediates the voltage-independent transmembrane transfer of potassium across the cell membrane through a constitutive interaction with calmodulin which binds the intracellular calcium allowing its opening. The current is characterized by a voltage-independent activation, an intracellular calcium concentration increase-dependent activation and a single-channel conductance of 10 picosiemens. Also presents an inwardly rectifying current, thus reducing its already small outward conductance of potassium ions, which is particularly the case when the membrane potential displays positive values, above + 20 mV. Activation is followed by membrane hyperpolarization. Thought to regulate neuronal excitability by contributing to the slow component of synaptic afterhyperpolarization. The sequence is that of Small conductance calcium-activated potassium channel protein 3 from Mus musculus (Mouse).